Reading from the N-terminus, the 355-residue chain is UDP-3-O-acylglucosamine N-acyltransferase (355 aa).

Histidine 258 acts as the Proton acceptor in catalysis.

It belongs to the transferase hexapeptide repeat family. LpxD subfamily. As to quaternary structure, homotrimer.

The catalysed reaction is a UDP-3-O-[(3R)-3-hydroxyacyl]-alpha-D-glucosamine + a (3R)-hydroxyacyl-[ACP] = a UDP-2-N,3-O-bis[(3R)-3-hydroxyacyl]-alpha-D-glucosamine + holo-[ACP] + H(+). The protein operates within bacterial outer membrane biogenesis; LPS lipid A biosynthesis. Functionally, catalyzes the N-acylation of UDP-3-O-acylglucosamine using 3-hydroxyacyl-ACP as the acyl donor. Is involved in the biosynthesis of lipid A, a phosphorylated glycolipid that anchors the lipopolysaccharide to the outer membrane of the cell. This is UDP-3-O-acylglucosamine N-acyltransferase from Agrobacterium fabrum (strain C58 / ATCC 33970) (Agrobacterium tumefaciens (strain C58)).